Consider the following 370-residue polypeptide: N-acetyldiaminopimelate deacetylase (370 aa).

Residue Asp67 is part of the active site. Catalysis depends on Glu126, which acts as the Proton acceptor.

Belongs to the peptidase M20A family. N-acetyldiaminopimelate deacetylase subfamily.

The enzyme catalyses N-acetyl-(2S,6S)-2,6-diaminopimelate + H2O = (2S,6S)-2,6-diaminopimelate + acetate. Its pathway is amino-acid biosynthesis; L-lysine biosynthesis via DAP pathway; LL-2,6-diaminopimelate from (S)-tetrahydrodipicolinate (acetylase route): step 3/3. Functionally, catalyzes the conversion of N-acetyl-diaminopimelate to diaminopimelate and acetate. The polypeptide is N-acetyldiaminopimelate deacetylase (Exiguobacterium sibiricum (strain DSM 17290 / CCUG 55495 / CIP 109462 / JCM 13490 / 255-15)).